The sequence spans 502 residues: Zinc finger C3HC-type protein 1 (502 aa).

Alanine 2 bears the N-acetylalanine mark. At serine 24 the chain carries Phosphoserine. At threonine 28 the chain carries Phosphothreonine. Residues 35–74 (LIDEGIAPEEGGVDAQDTSATSQSVNGSPQAEQPSLESTS) form a disordered region. Residues 50–72 (QDTSATSQSVNGSPQAEQPSLES) show a composition bias toward polar residues. Residues serine 58 and serine 62 each carry the phosphoserine modification. Threonine 84 is modified (phosphothreonine). The C3HC-type zinc-finger motif lies at 102 to 156 (CAKYGWVTVECDMLKCSSCQAFLCASLQPAFDFDRYKQRCAELKKALCTAHEKFC). The interval 302 to 423 (SSPIPGLEGR…SSRSFFDPTS (122 aa)) is disordered. Residues serine 321 and serine 329 each carry the phosphoserine modification. Threonine 333 is modified (phosphothreonine). 5 positions are modified to phosphoserine: serine 338, serine 344, serine 354, serine 359, and serine 370. The span at 351–360 (RTRSWDSSSP) shows a compositional bias: polar residues. The segment covering 371-380 (PTTRTRPVTR) has biased composition (low complexity). Serine 381 carries the phosphoserine modification. Threonine 384 carries the phosphothreonine modification. At serine 395 the chain carries Phosphoserine. A Nuclear localization signal motif is present at residues 396 to 402 (PLRKAKR). Serine 407 and serine 483 each carry phosphoserine. Positions 407-422 (SSSSSDTSSRSFFDPT) are enriched in low complexity.

Interacts with TPR; this interaction mediates ZC3HC1 nuclear envelopes (NE)-association but also required for proper positioning of a substantial amount of TPR at the nuclear basket (NB). Post-translationally, phosphorylated. May also be weakly phosphorylated on Tyr residues.

It localises to the nucleus. The protein localises to the nucleus envelope. Its function is as follows. Required for proper positioning of a substantial amount of TPR at the nuclear basket (NB) through interaction with TPR. The sequence is that of Zinc finger C3HC-type protein 1 (ZC3HC1) from Pongo abelii (Sumatran orangutan).